A 1112-amino-acid polypeptide reads, in one-letter code: DNA repair protein rad13 (1112 aa).

The segment at 1 to 95 is N-domain; that stretch reads MGVSGLWDIL…QTIQKRQARR (95 aa). Asp-30 and Asp-77 together coordinate Mg(2+). One can recognise a UIM domain in the interval 395 to 414; sequence TDDLILQLATQQSLEENKKS. Residues 742–870 are I-domain; that stretch reads KRSEKRDADE…LALEILHEFP (129 aa). Positions 777, 779, 798, 800, and 849 each coordinate Mg(2+). A disordered region spans residues 1056-1112; that stretch reads KMMASKNSSDSDSDSEDNFLASLTPKTNSSSISIENLPRKTKLSTSLLKKPSKRRRK. The segment covering 1079–1089 has biased composition (polar residues); sequence TPKTNSSSISI.

This sequence belongs to the XPG/RAD2 endonuclease family. XPG subfamily. It depends on Mg(2+) as a cofactor.

The protein localises to the nucleus. Single-stranded DNA endonuclease involved in excision repair of DNA damaged with UV light, bulky adducts, or cross-linking agents. Essential for the incision step of excision-repair. The chain is DNA repair protein rad13 (rad13) from Schizosaccharomyces pombe (strain 972 / ATCC 24843) (Fission yeast).